A 505-amino-acid chain; its full sequence is Maturase K (505 aa).

It belongs to the intron maturase 2 family. MatK subfamily.

The protein localises to the plastid. It localises to the chloroplast. Usually encoded in the trnK tRNA gene intron. Probably assists in splicing its own and other chloroplast group II introns. The chain is Maturase K from Idiospermum australiense (Ribbonwood tree).